Reading from the N-terminus, the 360-residue chain is Protein RecA (360 aa).

66–73 (GPESSGKT) serves as a coordination point for ATP. A disordered region spans residues 330–360 (DAKAIEERENPEKVKQDKEVPVNKDASDEKK).

This sequence belongs to the RecA family.

The protein localises to the cytoplasm. Functionally, can catalyze the hydrolysis of ATP in the presence of single-stranded DNA, the ATP-dependent uptake of single-stranded DNA by duplex DNA, and the ATP-dependent hybridization of homologous single-stranded DNAs. It interacts with LexA causing its activation and leading to its autocatalytic cleavage. In Lactobacillus johnsonii (strain CNCM I-12250 / La1 / NCC 533), this protein is Protein RecA.